Reading from the N-terminus, the 937-residue chain is Leucine--tRNA ligase (937 aa).

The 'HIGH' region signature appears at 34 to 44 (PYPSGAMHIGH). The short motif at 609 to 613 (KMSSS) is the 'KMSKS' region element.

The protein belongs to the class-I aminoacyl-tRNA synthetase family.

It is found in the cytoplasm. It carries out the reaction tRNA(Leu) + L-leucine + ATP = L-leucyl-tRNA(Leu) + AMP + diphosphate. The polypeptide is Leucine--tRNA ligase (Methanothermobacter thermautotrophicus (strain ATCC 29096 / DSM 1053 / JCM 10044 / NBRC 100330 / Delta H) (Methanobacterium thermoautotrophicum)).